Here is a 248-residue protein sequence, read N- to C-terminus: Triosephosphate isomerase (248 aa).

Residue 9–11 (NWK) participates in substrate binding. His-94 acts as the Electrophile in catalysis. Glu-166 serves as the catalytic Proton acceptor. Substrate contacts are provided by residues Gly-172, Ser-212, and 233–234 (GG).

The protein belongs to the triosephosphate isomerase family. As to quaternary structure, homodimer.

Its subcellular location is the cytoplasm. The catalysed reaction is D-glyceraldehyde 3-phosphate = dihydroxyacetone phosphate. It functions in the pathway carbohydrate biosynthesis; gluconeogenesis. Its pathway is carbohydrate degradation; glycolysis; D-glyceraldehyde 3-phosphate from glycerone phosphate: step 1/1. In terms of biological role, involved in the gluconeogenesis. Catalyzes stereospecifically the conversion of dihydroxyacetone phosphate (DHAP) to D-glyceraldehyde-3-phosphate (G3P). The sequence is that of Triosephosphate isomerase from Clostridium acetobutylicum (strain ATCC 824 / DSM 792 / JCM 1419 / IAM 19013 / LMG 5710 / NBRC 13948 / NRRL B-527 / VKM B-1787 / 2291 / W).